The primary structure comprises 301 residues: Acetyl-coenzyme A carboxylase carboxyl transferase subunit beta (301 aa).

The CoA carboxyltransferase N-terminal domain occupies 29–298 (LWVKCPETGQ…AEPAEEEAEP (270 aa)).

It belongs to the AccD/PCCB family. In terms of assembly, acetyl-CoA carboxylase is a heterohexamer composed of biotin carboxyl carrier protein (AccB), biotin carboxylase (AccC) and two subunits each of ACCase subunit alpha (AccA) and ACCase subunit beta (AccD).

It is found in the cytoplasm. The catalysed reaction is N(6)-carboxybiotinyl-L-lysyl-[protein] + acetyl-CoA = N(6)-biotinyl-L-lysyl-[protein] + malonyl-CoA. The protein operates within lipid metabolism; malonyl-CoA biosynthesis; malonyl-CoA from acetyl-CoA: step 1/1. Component of the acetyl coenzyme A carboxylase (ACC) complex. Biotin carboxylase (BC) catalyzes the carboxylation of biotin on its carrier protein (BCCP) and then the CO(2) group is transferred by the transcarboxylase to acetyl-CoA to form malonyl-CoA. This chain is Acetyl-coenzyme A carboxylase carboxyl transferase subunit beta, found in Methylobacterium nodulans (strain LMG 21967 / CNCM I-2342 / ORS 2060).